A 174-amino-acid polypeptide reads, in one-letter code: Nucleoside-triphosphatase THEP1 (174 aa).

Residues 15 to 22 (GMPGVGKT) and 102 to 109 (LAIVDEIG) each bind ATP.

This sequence belongs to the THEP1 NTPase family.

It catalyses the reaction a ribonucleoside 5'-triphosphate + H2O = a ribonucleoside 5'-diphosphate + phosphate + H(+). In terms of biological role, has nucleotide phosphatase activity towards ATP, GTP, CTP, TTP and UTP. May hydrolyze nucleoside diphosphates with lower efficiency. This is Nucleoside-triphosphatase THEP1 from Pyrobaculum islandicum (strain DSM 4184 / JCM 9189 / GEO3).